The sequence spans 257 residues: UPF0246 protein BF3795 (257 aa).

Belongs to the UPF0246 family.

The protein is UPF0246 protein BF3795 of Bacteroides fragilis (strain ATCC 25285 / DSM 2151 / CCUG 4856 / JCM 11019 / LMG 10263 / NCTC 9343 / Onslow / VPI 2553 / EN-2).